The chain runs to 871 residues: Dual O-methyltransferase/FAD-dependent monooxygenase CTB3 (871 aa).

Positions 1-429 (MMQFQRDLEA…GLLTVRSAGQ (429 aa)) are O-methyltransferase. Residue Asp279 participates in S-adenosyl-L-methionine binding. The active-site Proton acceptor is His331. Residues 430-871 (TALSGTNTLT…NLVDCSEFVF (442 aa)) are FAD-dependent monooxygenase. FAD is bound by residues Glu485, Arg569, Asp793, and Ala806.

This sequence in the C-terminal section; belongs to the paxM FAD-dependent monooxygenase family. It in the N-terminal section; belongs to the class I-like SAM-binding methyltransferase superfamily. Cation-independent O-methyltransferase family. COMT subfamily.

It carries out the reaction nor-toralactone + S-adenosyl-L-methionine = toralactone + S-adenosyl-L-homocysteine + H(+). It catalyses the reaction toralactone + NADH + O2 + H(+) = 1-(3,4,5-trihydroxy-7-methoxynaphthalen-2-yl)propan-2-one + CO2 + NAD(+). It functions in the pathway mycotoxin biosynthesis. Dual O-methyltransferase/FAD-dependent monooxygenase; part of the gene cluster that mediates the biosynthesis of cercosporin, a light-activated, non-host-selective toxin. The perylenequinone chromophore of cercosporin absorbs light energy to attain an electronically-activated triplet state and produces active oxygen species such as the hydroxyl radical, superoxide, hydrogen peroxide or singlet oxygen upon reaction with oxygen molecules. These reactive oxygen species cause damage to various cellular components including lipids, proteins and nucleic acids. The first step of cercosporin biosynthesis is performed by the polyketide synthase CTB1 which catalyzes the formation of nor-toralactone. The starter unit acyltransferase (SAT) domain of CTB1 initiates polyketide extension by the selective utilization of acetyl-CoA, which is elongated to the heptaketide in the beta-ketoacyl synthase (KS) domain by successive condensations with six malonyl units introduced by the malonyl acyltransferase (MAT) domain. The product template (PT) domain catalyzes C4-C9 and C2-C11 aldol cyclizations and dehydrations to a trihydroxynaphthalene, which is thought to be delivered to the thioesterase (TE) domain for product release. The bifunctional enzyme CTB3 then methylates nor-toralactone to toralactone before conducting an unusual oxidative aromatic ring opening. The O-methyltransferase CTB2 further methylates the nascent OH-6 of the CBT3 product, blocking further oxidation at this site before the reductase CTB6 reduces the 2-oxopropyl ketone at position C7, giving naphthalene. The FAD-dependent monooxygenase CTB5 in concert with the multicopper oxidase CTB12 are responsible for homodimerization of naphthalene with CTB7 installing the dioxepine moiety, finally producing cercosporin. The fasciclin domain-containing protein CTB11 might act with CTB5 and CTB12 whereas the roles of CTB9 and CTB10 have still to be elucidated. This chain is Dual O-methyltransferase/FAD-dependent monooxygenase CTB3, found in Cercospora beticola (Sugarbeet leaf spot fungus).